The chain runs to 47 residues: Diuretic hormone 2 (47 aa).

This sequence belongs to the sauvagine/corticotropin-releasing factor/urotensin I family.

It is found in the secreted. In terms of biological role, stimulates fluid secretion by the Malpighian tubules. Increases cyclic AMP production in Malpighian tubules. This is Diuretic hormone 2 from Tenebrio molitor (Yellow mealworm beetle).